The chain runs to 325 residues: Phospholipid phosphatase-related protein type 1 (325 aa).

The next 3 helical transmembrane spans lie at Tyr-11–Leu-31, Phe-67–Ile-87, and Phe-127–Val-147. Residue Asn-163 is glycosylated (N-linked (GlcNAc...) asparagine). A run of 3 helical transmembrane segments spans residues Ala-201–Thr-218, Val-230–Val-247, and Val-257–His-277. Asn-316 carries N-linked (GlcNAc...) asparagine glycosylation.

The protein belongs to the PA-phosphatase related phosphoesterase family.

The protein localises to the cell membrane. The protein resides in the cell projection. It is found in the neuron projection. Functionally, may play a role in neurite outgrowth and neurogenesis. The polypeptide is Phospholipid phosphatase-related protein type 1 (Xenopus tropicalis (Western clawed frog)).